The chain runs to 697 residues: uncharacterized protein (697 aa).

The next 14 helical transmembrane spans lie at 65–85 (PVRN…VGIY), 106–126 (CTFR…LHNF), 131–151 (YRQS…EKAI), 163–183 (DAAL…DINE), 194–214 (LSSY…VPLG), 227–247 (TSAT…TASI), 286–306 (STNA…ANKD), 316–336 (PVTD…VLLE), 361–381 (SDEI…PEGV), 394–414 (MFEL…MAWE), 419–439 (ERML…EPYH), 450–470 (SVKR…YLAI), 487–507 (QGSQ…YKVW), and 558–578 (TSAG…HHRQ). The interval 246–321 (SINVRTSATT…NRFHPVTDIN (76 aa)) is disordered. A compositionally biased stretch (low complexity) spans 251-298 (TSATTTESTNSNTNATTTESTNSSTNATTTASTNSSTNATTTESTNAS). A compositionally biased stretch (basic and acidic residues) spans 299 to 321 (AKEDANKDGNAEDNRFHPVTDIN).

It localises to the membrane. This is an uncharacterized protein from Saccharomyces cerevisiae (strain ATCC 204508 / S288c) (Baker's yeast).